The following is a 1477-amino-acid chain: Putative insulin-like peptide receptor (1477 aa).

The first 24 residues, 1–24 (MMRNVQSFYFLFLLIVLNFHVVLS), serve as a signal peptide directing secretion. At 25 to 980 (AVCIGQRATT…LSVTKNNNQL (956 aa)) the chain is on the extracellular side. N55, N255, N300, N325, N457, N491, N549, N644, N732, N791, N874, N895, and N957 each carry an N-linked (GlcNAc...) asparagine glycan. Fibronectin type-III domains follow at residues 652 to 750 (EPLG…IKAD) and 780 to 869 (NKSP…IVQA). Residues 880-971 (LDSKMVRVQV…EEIHFKVAEL (92 aa)) form the Fibronectin type-III 3 domain. The chain crosses the membrane as a helical span at residues 981–1001 (IIGIISAVSAVIVALLVFILL). Residues 1002-1477 (YMFLHRKLEK…EIFYGKPIPV (476 aa)) are Cytoplasmic-facing. A Protein kinase domain is found at 1044-1315 (IELIRELGQG…LENEVDDDFV (272 aa)). ATP is bound by residues 1050–1058 (LGQGSFGMV) and K1077. D1175 serves as the catalytic Proton acceptor. Y1201 carries the phosphotyrosine; by autocatalysis modification. Disordered stretches follow at residues 1350–1376 (YTKG…KSKE) and 1391–1421 (KYDA…SNAC). Residues 1356–1368 (NMQNMLSRSQNRK) show a composition bias toward polar residues. Residues 1403-1412 (KKKKRPRSKR) are compositionally biased toward basic residues.

It belongs to the protein kinase superfamily. Tyr protein kinase family. Insulin receptor subfamily. Mn(2+) is required as a cofactor. Expressed in dividing epithelial cells.

It localises to the membrane. It catalyses the reaction L-tyrosyl-[protein] + ATP = O-phospho-L-tyrosyl-[protein] + ADP + H(+). Its function is as follows. This receptor probably binds an insulin related protein and has a tyrosine-protein kinase activity. This is Putative insulin-like peptide receptor (HTK7) from Hydra vulgaris (Hydra).